Here is a 338-residue protein sequence, read N- to C-terminus: 3-phosphoshikimate 1-carboxyvinyltransferase 2 (338 aa).

Arg-25 contributes to the phosphoenolpyruvate binding site. Residues Ser-72, Ser-73, Gln-74, Ser-100, Asp-225, and Lys-252 each coordinate 3-phosphoshikimate. Gln-74 contributes to the phosphoenolpyruvate binding site. Asp-225 serves as the catalytic Proton acceptor. Residues Arg-256, Arg-298, and Lys-323 each contribute to the phosphoenolpyruvate site.

It belongs to the EPSP synthase family.

It localises to the plastid. It is found in the chloroplast. It carries out the reaction 3-phosphoshikimate + phosphoenolpyruvate = 5-O-(1-carboxyvinyl)-3-phosphoshikimate + phosphate. Its pathway is metabolic intermediate biosynthesis; chorismate biosynthesis; chorismate from D-erythrose 4-phosphate and phosphoenolpyruvate: step 6/7. Its function is as follows. Catalyzes the transfer of the enolpyruvyl moiety of phosphoenolpyruvate (PEP) to the 5-hydroxyl of shikimate-3-phosphate (S3P) to produce enolpyruvyl shikimate-3-phosphate and inorganic phosphate. This is 3-phosphoshikimate 1-carboxyvinyltransferase 2 (EPSPS-2) from Nicotiana tabacum (Common tobacco).